We begin with the raw amino-acid sequence, 291 residues long: Protease HtpX (291 aa).

2 helical membrane-spanning segments follow: residues isoleucine 4–isoleucine 24 and leucine 36–methionine 56. Histidine 143 lines the Zn(2+) pocket. Glutamate 144 is a catalytic residue. Residue histidine 147 participates in Zn(2+) binding. Helical transmembrane passes span glycine 151–serine 171 and phenylalanine 199–tryptophan 219. Residue glutamate 225 participates in Zn(2+) binding.

It belongs to the peptidase M48B family. The cofactor is Zn(2+).

It localises to the cell inner membrane. The protein is Protease HtpX of Aliivibrio fischeri (strain ATCC 700601 / ES114) (Vibrio fischeri).